The sequence spans 332 residues: Ribosomal RNA small subunit methyltransferase H (332 aa).

S-adenosyl-L-methionine is bound by residues 36 to 38, Asp-61, Phe-88, Asp-114, and Gln-121; that span reads GGH.

Belongs to the methyltransferase superfamily. RsmH family.

The protein localises to the cytoplasm. It carries out the reaction cytidine(1402) in 16S rRNA + S-adenosyl-L-methionine = N(4)-methylcytidine(1402) in 16S rRNA + S-adenosyl-L-homocysteine + H(+). Functionally, specifically methylates the N4 position of cytidine in position 1402 (C1402) of 16S rRNA. The sequence is that of Ribosomal RNA small subunit methyltransferase H from Pelodictyon phaeoclathratiforme (strain DSM 5477 / BU-1).